A 254-amino-acid polypeptide reads, in one-letter code: Alcohol dehydrogenase 1 (254 aa).

An NAD(+)-binding site is contributed by 10 to 33 (FVAGLGGIGLDTSREIVKSGPKNL). Substrate is bound at residue S138. Y151 (proton acceptor) is an active-site residue.

Belongs to the short-chain dehydrogenases/reductases (SDR) family. In terms of assembly, homodimer.

The catalysed reaction is a primary alcohol + NAD(+) = an aldehyde + NADH + H(+). It catalyses the reaction a secondary alcohol + NAD(+) = a ketone + NADH + H(+). The protein is Alcohol dehydrogenase 1 (Adh1) of Drosophila montana (Fruit fly).